The following is a 489-amino-acid chain: Protein SIP5 (489 aa).

Positions 1–84 are disordered; it reads MGNVPGKIDQ…RKTSREKELA (84 aa). The residue at position 13 (Ser-13) is a Phosphoserine. 2 stretches are compositionally biased toward polar residues: residues 21–32 and 51–69; these read SSYNTTSSNSVI and LVNNILNGNNARTKTGSHL. A phosphothreonine mark is found at Thr-183 and Thr-433. The tract at residues 419 to 489 is disordered; it reads SNRLIDPSHS…SKNRNTSLRP (71 aa). Residue Ser-436 is modified to Phosphoserine. Thr-438 is modified (phosphothreonine). Residues 461–477 are compositionally biased toward basic and acidic residues; the sequence is QMVREAIRLSLEDQDNR.

Belongs to the SIP5 family. Interacts with NPA1, SNF1 and REG1.

The protein resides in the cytoplasm. In terms of biological role, may negatively regulate the SNF1 kinase by promoting the interaction of the REG1/GLC7 phosphatase complex with the kinase. Deletion of SIP5 promotes resistance to artemisinin, which is probably an indirect effect of an action on the electron transport chain. This Saccharomyces cerevisiae (strain ATCC 204508 / S288c) (Baker's yeast) protein is Protein SIP5 (SIP5).